We begin with the raw amino-acid sequence, 389 residues long: 5-hydroxytryptamine receptor 1B (389 aa).

Residues 1–27 (MEETNTHCAPPPPAGSQTGVSQANLSS) form a disordered region. Over 1-45 (MEETNTHCAPPPPAGSQTGVSQANLSSAPPNCSTEGYIYQDSIAL) the chain is Extracellular. The segment covering 15-27 (GSQTGVSQANLSS) has biased composition (polar residues). Residues Asn-24 and Asn-31 are each glycosylated (N-linked (GlcNAc...) asparagine). Residues 46–71 (PWKVLLILVLALFTLATTLSNAFVIA) form a helical membrane-spanning segment. Topologically, residues 72–85 (TVYRTRKLHTPANY) are cytoplasmic. A helical membrane pass occupies residues 86 to 110 (LIASLAVTDLLVSILVMPISTMYTV). The Extracellular segment spans residues 111-118 (TGRWTLGQ). Residues 119-144 (VVCDFWLSSDITCCTASILHLCVIAL) form a helical membrane-spanning segment. A disulfide bridge links Cys-121 with Cys-198. Ergotamine-binding residues include Asp-128 and Thr-133. The short motif at 145-147 (DRY) is the DRY motif; important for ligand-induced conformation changes and signaling element. Topologically, residues 145–164 (DRYWAITDAVEYSAKRTPKR) are cytoplasmic. The helical transmembrane segment at 165-183 (AAVMIALVWVFSISISLPP) threads the bilayer. Over 184–204 (FFWRQAKAEEEVSDCRVNTDH) the chain is Extracellular. Val-200 provides a ligand contact to ergotamine. A helical transmembrane segment spans residues 205–228 (MLYTVYSTVGAFYFPTLLLIALYG). The Cytoplasmic portion of the chain corresponds to 229–314 (RIYVEARSRI…AARERKATKT (86 aa)). The segment covering 258–271 (DSPGSTSSVTSVNS) has biased composition (polar residues). Positions 258–281 (DSPGSTSSVTSVNSRAPDVPSESG) are disordered. A helical membrane pass occupies residues 315–336 (LGIILGAFIVCWLPFFIISLVM). Over 337–346 (PICKDACWFH) the chain is Extracellular. Residues 347 to 369 (LAIFDFFTWLGYLNSLINPIIYT) form a helical membrane-spanning segment. The NPxxY motif; important for ligand-induced conformation changes and signaling signature appears at 364 to 368 (NPIIY). Residues 370–389 (MSNEDFKQAFHKLIRFKCTG) are Cytoplasmic-facing. Cys-387 is lipidated: S-palmitoyl cysteine.

This sequence belongs to the G-protein coupled receptor 1 family. As to quaternary structure, homodimer. Heterodimer with HTR1D. Phosphorylated. Desensitization of the receptor may be mediated by its phosphorylation. In terms of processing, palmitoylated.

Its subcellular location is the cell membrane. In terms of biological role, G-protein coupled receptor for 5-hydroxytryptamine (serotonin). Also functions as a receptor for ergot alkaloid derivatives, various anxiolytic and antidepressant drugs and other psychoactive substances, such as lysergic acid diethylamide (LSD). Ligand binding causes a conformation change that triggers signaling via guanine nucleotide-binding proteins (G proteins) and modulates the activity of downstream effectors, such as adenylate cyclase. HTR1B is coupled to G(i)/G(o) G alpha proteins and mediates inhibitory neurotransmission by inhibiting adenylate cyclase activity. Arrestin family members inhibit signaling via G proteins and mediate activation of alternative signaling pathways. Regulates the release of 5-hydroxytryptamine, dopamine and acetylcholine in the brain, and thereby affects neural activity, nociceptive processing, pain perception, mood and behavior. Besides, plays a role in vasoconstriction of cerebral arteries. This chain is 5-hydroxytryptamine receptor 1B (HTR1B), found in Felis catus (Cat).